We begin with the raw amino-acid sequence, 89 residues long: Small ribosomal subunit protein uS14 (89 aa).

It belongs to the universal ribosomal protein uS14 family. As to quaternary structure, part of the 30S ribosomal subunit. Contacts proteins S3 and S10.

Its function is as follows. Binds 16S rRNA, required for the assembly of 30S particles and may also be responsible for determining the conformation of the 16S rRNA at the A site. The protein is Small ribosomal subunit protein uS14 of Shouchella clausii (strain KSM-K16) (Alkalihalobacillus clausii).